A 121-amino-acid chain; its full sequence is Small ribosomal subunit protein uS10 (121 aa).

Residues 1–20 (MTEQKAKSSKTSSEEAKKQK) form a disordered region.

Belongs to the universal ribosomal protein uS10 family. In terms of assembly, part of the 30S ribosomal subunit.

Functionally, involved in the binding of tRNA to the ribosomes. This Mycoplasmoides gallisepticum (strain R(low / passage 15 / clone 2)) (Mycoplasma gallisepticum) protein is Small ribosomal subunit protein uS10.